Consider the following 393-residue polypeptide: MTRIGTPLSPTATRVLLCGCGELGKEVVIELQRLGVEVIAVDRYANAPAMQVAHRSHVVNMLDGVALRAVIEAEKPHYIVPEIEAIATATLVELENEGFNVVPTARATQLTMNREGIRRLAAEELDLPTSPYHFADTFEDYAKAVADVGYPCVVKPVMSSSGKGQSLLRSDADLQKSWDYAQEGGRAGKGRVIVEGFIDFEYEITLLTVRHVGGTTFLEPVGHRQEKGDYQESWQPQAMSPKALAESQRVAKAVTDALGGRGLFGVELFVKGDQVWFSEVSPRPHDTGLVTLISQDLSQFALHARAILGLPIPVVRQFGPSASAVILPEGQSQQTSFANLGAALSEPDTAIRLFGKPEINGTRRMGVCLARDESVELARAKATRASQAVKVEF.

Residues Glu22–Leu23 and Glu82 each bind N(1)-(5-phospho-beta-D-ribosyl)glycinamide. ATP contacts are provided by residues Arg114, Lys155, Ser160 to Gln165, Glu195 to Ile198, and Glu203. The 190-residue stretch at Arg119–Leu308 folds into the ATP-grasp domain. Residues Glu267 and Glu279 each contribute to the Mg(2+) site. N(1)-(5-phospho-beta-D-ribosyl)glycinamide-binding positions include Asp286, Lys356, and Arg363–Arg364.

The protein belongs to the PurK/PurT family. As to quaternary structure, homodimer.

The catalysed reaction is N(1)-(5-phospho-beta-D-ribosyl)glycinamide + formate + ATP = N(2)-formyl-N(1)-(5-phospho-beta-D-ribosyl)glycinamide + ADP + phosphate + H(+). It functions in the pathway purine metabolism; IMP biosynthesis via de novo pathway; N(2)-formyl-N(1)-(5-phospho-D-ribosyl)glycinamide from N(1)-(5-phospho-D-ribosyl)glycinamide (formate route): step 1/1. Involved in the de novo purine biosynthesis. Catalyzes the transfer of formate to 5-phospho-ribosyl-glycinamide (GAR), producing 5-phospho-ribosyl-N-formylglycinamide (FGAR). Formate is provided by PurU via hydrolysis of 10-formyl-tetrahydrofolate. This chain is Formate-dependent phosphoribosylglycinamide formyltransferase, found in Pseudomonas putida (strain GB-1).